The chain runs to 212 residues: FMN-dependent NADH:quinone oxidoreductase (212 aa).

FMN is bound by residues Ser-10 and 17 to 19; that span reads SFS.

This sequence belongs to the azoreductase type 1 family. Homodimer. It depends on FMN as a cofactor.

It carries out the reaction 2 a quinone + NADH + H(+) = 2 a 1,4-benzosemiquinone + NAD(+). The enzyme catalyses N,N-dimethyl-1,4-phenylenediamine + anthranilate + 2 NAD(+) = 2-(4-dimethylaminophenyl)diazenylbenzoate + 2 NADH + 2 H(+). In terms of biological role, quinone reductase that provides resistance to thiol-specific stress caused by electrophilic quinones. Its function is as follows. Also exhibits azoreductase activity. Catalyzes the reductive cleavage of the azo bond in aromatic azo compounds to the corresponding amines. The sequence is that of FMN-dependent NADH:quinone oxidoreductase from Malacoplasma penetrans (strain HF-2) (Mycoplasma penetrans).